The following is a 766-amino-acid chain: MGSFLKSFRKDVGSAAPSVGAPPAKKEPQPLPMTPLEKMLTELGPIRGDGSDKFYGMENFGNTCYCNSILQCLYYSVPFREAVLNYPKRTPIEDLEAALAKALRYQDPNARLEAEALAEKQKAANSPRPGQPPNPQQKPEDKDSPEYKKKLALQTLPLLETTDNSVSYGIPESLFSSLKDMFESIVGSQSRIGIIRPQHFLEVLRRENEMFRTAMHQDAHEFLNLLLNEVVVDVEKAAAKLLESPQPASDVSDSVIPSSSSGSRTPNTTRWVHELFEGLLTSETQCLTCEKASQRDEVFLDLSVDLEQHSSVTSCLRKFSAEEMLCERNKFHCDNCGGLQEAEKRMKIKRLPRILALHLKRFKYTEDLQRLQKLFHRVVYPYHLRLFNTTDDAEDPDRLYELYAVVVHIGGGPYHGHYVSIIKTQDRGWLLFDDEMVEPVDKNYVRNFFGDKPGLACAYVLFYQETTMEAVMKEQEQENTEPPVEVNASTLKQNGFSSSATLAHAHSASQVPTYEDHDRFTGLKRAPTAPQLSTHPEHTTTDSESLPSPAPDPAPLTSLPPIPPIPETPPAPLTSRKSDLQSKKERVKEEKERKAAEKEKEKQRRKEIETRLKDRQRREDDDLKAALEASKVSKEDEDRRNHAENGTSKKNAGGLGRFRSLSQRLSTKESRTSLSRIPPLPNGNHTLSKVPDESEQTHPKSPTPPAPLSRPASQPLNDDLLGSPRADTLAVPTEQEHIKNSKHDRSSHGKWRSFSLRKKSFNILSS.

A disordered region spans residues 1–32 (MGSFLKSFRKDVGSAAPSVGAPPAKKEPQPLP). A compositionally biased stretch (low complexity) spans 13-23 (GSAAPSVGAPP). Residues 55–466 (YGMENFGNTC…CAYVLFYQET (412 aa)) form the USP domain. C64 (nucleophile) is an active-site residue. Disordered stretches follow at residues 115 to 145 (EALA…KDSP) and 243 to 266 (ESPQ…SRTP). Over residues 249 to 263 (SDVSDSVIPSSSSGS) the composition is skewed to low complexity. The Proton acceptor role is filled by H417. The segment at 526 to 752 (APTAPQLSTH…HDRSSHGKWR (227 aa)) is disordered. Positions 548–572 (SPAPDPAPLTSLPPIPPIPETPPAP) are enriched in pro residues. The stretch at 573-620 (LTSRKSDLQSKKERVKEEKERKAAEKEKEKQRRKEIETRLKDRQRRED) forms a coiled coil. Basic and acidic residues-rich tracts occupy residues 576-643 (RKSD…RNHA) and 734-747 (EQEH…DRSS).

It belongs to the peptidase C19 family. In terms of assembly, interacts with creA, creC and qutD.

It catalyses the reaction Thiol-dependent hydrolysis of ester, thioester, amide, peptide and isopeptide bonds formed by the C-terminal Gly of ubiquitin (a 76-residue protein attached to proteins as an intracellular targeting signal).. Functionally, ubiquitin thioesterase component of the regulatory network controlling carbon source utilization through ubiquitination and deubiquitination involving creA, creB, creC, creD and acrB. Deubiquitinates the creA catabolic repressor and the quinate permease qutD. Also plays a role in response to carbon starvation and the control of extracellular proteases activity. The sequence is that of Ubiquitin carboxyl-terminal hydrolase creB (creB) from Emericella nidulans (strain FGSC A4 / ATCC 38163 / CBS 112.46 / NRRL 194 / M139) (Aspergillus nidulans).